The following is a 465-amino-acid chain: Ribulose bisphosphate carboxylase large chain (465 aa).

An N6,N6,N6-trimethyllysine modification is found at Lys4. Positions 113 and 163 each coordinate substrate. Lys165 serves as the catalytic Proton acceptor. Lys167 contributes to the substrate binding site. Mg(2+) contacts are provided by Lys191, Asp193, and Glu194. Residue Lys191 is modified to N6-carboxylysine. His284 functions as the Proton acceptor in the catalytic mechanism. Substrate-binding residues include Arg285, His317, and Ser369.

It belongs to the RuBisCO large chain family. Type I subfamily. Heterohexadecamer of 8 large chains and 8 small chains; disulfide-linked. The disulfide link is formed within the large subunit homodimers. Mg(2+) is required as a cofactor. The disulfide bond which can form in the large chain dimeric partners within the hexadecamer appears to be associated with oxidative stress and protein turnover.

It localises to the plastid. It is found in the chloroplast. It catalyses the reaction 2 (2R)-3-phosphoglycerate + 2 H(+) = D-ribulose 1,5-bisphosphate + CO2 + H2O. The enzyme catalyses D-ribulose 1,5-bisphosphate + O2 = 2-phosphoglycolate + (2R)-3-phosphoglycerate + 2 H(+). In terms of biological role, ruBisCO catalyzes two reactions: the carboxylation of D-ribulose 1,5-bisphosphate, the primary event in carbon dioxide fixation, as well as the oxidative fragmentation of the pentose substrate in the photorespiration process. Both reactions occur simultaneously and in competition at the same active site. The polypeptide is Ribulose bisphosphate carboxylase large chain (Cornus oblonga).